Reading from the N-terminus, the 386-residue chain is 8-amino-7-oxononanoate synthase (386 aa).

Positions 22 and 29 each coordinate substrate. A pyridoxal 5'-phosphate-binding site is contributed by 109–110 (GY). Substrate is bound at residue H134. Pyridoxal 5'-phosphate contacts are provided by residues S182, 207–210 (DDAH), and 237–240 (TLSK). K240 is subject to N6-(pyridoxal phosphate)lysine. T349 serves as a coordination point for substrate.

This sequence belongs to the class-II pyridoxal-phosphate-dependent aminotransferase family. BioF subfamily. Homodimer. Requires pyridoxal 5'-phosphate as cofactor.

It carries out the reaction 6-carboxyhexanoyl-[ACP] + L-alanine + H(+) = (8S)-8-amino-7-oxononanoate + holo-[ACP] + CO2. It participates in cofactor biosynthesis; biotin biosynthesis. In terms of biological role, catalyzes the decarboxylative condensation of pimeloyl-[acyl-carrier protein] and L-alanine to produce 8-amino-7-oxononanoate (AON), [acyl-carrier protein], and carbon dioxide. The chain is 8-amino-7-oxononanoate synthase from Beijerinckia indica subsp. indica (strain ATCC 9039 / DSM 1715 / NCIMB 8712).